We begin with the raw amino-acid sequence, 206 residues long: Large ribosomal subunit protein bL25 (206 aa).

The protein belongs to the bacterial ribosomal protein bL25 family. CTC subfamily. Part of the 50S ribosomal subunit; part of the 5S rRNA/L5/L18/L25 subcomplex. Contacts the 5S rRNA. Binds to the 5S rRNA independently of L5 and L18.

Functionally, this is one of the proteins that binds to the 5S RNA in the ribosome where it forms part of the central protuberance. This chain is Large ribosomal subunit protein bL25, found in Bartonella henselae (strain ATCC 49882 / DSM 28221 / CCUG 30454 / Houston 1) (Rochalimaea henselae).